The chain runs to 132 residues: Putative esterase Ta0293 (132 aa).

This sequence belongs to the thioesterase PaaI family.

This is Putative esterase Ta0293 from Thermoplasma acidophilum (strain ATCC 25905 / DSM 1728 / JCM 9062 / NBRC 15155 / AMRC-C165).